Here is a 129-residue protein sequence, read N- to C-terminus: SOSS complex subunit C homolog (129 aa).

A disordered region spans residues 105-129 (RLEPLPSPATTPTTPNAPPSHSISK).

The protein belongs to the SOSS-C family.

The polypeptide is SOSS complex subunit C homolog (Drosophila simulans (Fruit fly)).